Here is a 95-residue protein sequence, read N- to C-terminus: Large ribosomal subunit protein uL23 (95 aa).

Belongs to the universal ribosomal protein uL23 family. In terms of assembly, part of the 50S ribosomal subunit. Contacts protein L29, and trigger factor when it is bound to the ribosome.

In terms of biological role, one of the early assembly proteins it binds 23S rRNA. One of the proteins that surrounds the polypeptide exit tunnel on the outside of the ribosome. Forms the main docking site for trigger factor binding to the ribosome. In Anoxybacillus flavithermus (strain DSM 21510 / WK1), this protein is Large ribosomal subunit protein uL23.